The following is a 486-amino-acid chain: Cobyric acid synthase (486 aa).

The 188-residue stretch at 248–435 (VLNVVVPVLP…LHGLFESPAA (188 aa)) folds into the GATase cobBQ-type domain. Catalysis depends on Cys-329, which acts as the Nucleophile. His-427 is an active-site residue.

Belongs to the CobB/CobQ family. CobQ subfamily.

Its pathway is cofactor biosynthesis; adenosylcobalamin biosynthesis. Its function is as follows. Catalyzes amidations at positions B, D, E, and G on adenosylcobyrinic A,C-diamide. NH(2) groups are provided by glutamine, and one molecule of ATP is hydrogenolyzed for each amidation. The polypeptide is Cobyric acid synthase (Pseudomonas syringae pv. tomato (strain ATCC BAA-871 / DC3000)).